We begin with the raw amino-acid sequence, 287 residues long: Inorganic pyrophosphatase (287 aa).

R79 provides a ligand contact to diphosphate. Residues D116, D121, and D153 each contribute to the Mg(2+) site.

The protein belongs to the PPase family. Mg(2+) serves as cofactor.

The protein localises to the cytoplasm. It carries out the reaction diphosphate + H2O = 2 phosphate + H(+). In Candida glabrata (strain ATCC 2001 / BCRC 20586 / JCM 3761 / NBRC 0622 / NRRL Y-65 / CBS 138) (Yeast), this protein is Inorganic pyrophosphatase (IPP1).